A 306-amino-acid chain; its full sequence is Porphobilinogen deaminase (306 aa).

Cys239 is modified (S-(dipyrrolylmethanemethyl)cysteine).

It belongs to the HMBS family. In terms of assembly, monomer. It depends on dipyrromethane as a cofactor.

It carries out the reaction 4 porphobilinogen + H2O = hydroxymethylbilane + 4 NH4(+). It participates in porphyrin-containing compound metabolism; protoporphyrin-IX biosynthesis; coproporphyrinogen-III from 5-aminolevulinate: step 2/4. Its function is as follows. Tetrapolymerization of the monopyrrole PBG into the hydroxymethylbilane pre-uroporphyrinogen in several discrete steps. This is Porphobilinogen deaminase from Helicobacter pylori (strain HPAG1).